The chain runs to 358 residues: MKKKVLVGMSGGVDSSVAAYLLKQQGYDVIGATMQIWQHDEEFEEREGGCCSLSAVDDARRVCDKLDIPFYVLNFRDYFKEKVIDKFVQEYIDGKTPNPCIECNKHLKFDELLRRARGIGADYVATGHYAKIEKRDDRYLLIRSDDDRKDQTYALYNFTQDQLEHTLMPCGDYEKTKIREIAKEIGLAVHNKKDSEEICFISDNNHGKYISEAEPNRVKPGNFVDKSGNILGKHKGIVYYTIGQRKGLGLSLGRPVFVTNINAKTNEVVLGSEDDIFKTELIATDVNFIPFDKLEKEIEVTAKIRYSARPAEATLIPLPNGRVKVIFKEKQRAITKGQSVVFYDDEIVVGGGIIESII.

ATP contacts are provided by residues 8–15 and M34; that span reads GMSGGVDS. C103 functions as the Nucleophile in the catalytic mechanism. C103 and C199 form a disulfide bridge. Residue G127 participates in ATP binding. Residues 149 to 151 are interaction with tRNA; the sequence is KDQ. The active-site Cysteine persulfide intermediate is C199. An interaction with tRNA region spans residues 305–306; sequence RY.

Belongs to the MnmA/TRMU family.

Its subcellular location is the cytoplasm. The catalysed reaction is S-sulfanyl-L-cysteinyl-[protein] + uridine(34) in tRNA + AH2 + ATP = 2-thiouridine(34) in tRNA + L-cysteinyl-[protein] + A + AMP + diphosphate + H(+). Catalyzes the 2-thiolation of uridine at the wobble position (U34) of tRNA, leading to the formation of s(2)U34. The protein is tRNA-specific 2-thiouridylase MnmA of Clostridium beijerinckii (strain ATCC 51743 / NCIMB 8052) (Clostridium acetobutylicum).